Consider the following 270-residue polypeptide: Glucan endo-1,3-beta-glucosidase (270 aa).

Positions 1 to 18 (MNAFTFPLLLAFCAFAHG) are cleaved as a signal peptide. A GH16 domain is found at 22–270 (LDWEDEFNGG…VEYVKKWTWN (249 aa)). Residue E137 is the Nucleophile of the active site. E142 serves as the catalytic Proton donor.

The protein belongs to the glycosyl hydrolase 16 family.

It is found in the secreted. It catalyses the reaction Hydrolysis of (1-&gt;3)-beta-D-glucosidic linkages in (1-&gt;3)-beta-D-glucans.. With respect to regulation, ca(2+) does not affect the enzyme activity nor the thermostability. Other cations, such as Mg(2+), Mn(2+), Cu(2+), Zn(2+), Ag(+) or Hg(2+) do not cause any serious adverse effect on the activity. Also no significant change in the activity in response to the addition of 1 mM EDTA. Its function is as follows. Hydrolyzes laminarin majorily to glucose (G1), laminaribiose (L2), laminaritriose (L3), laminaritetraose (L4) and laminaripentaose (L5). Hydrolyzes laminarioligosaccharides L3, L4, L5 and laminarihexaose (L6) to G1, L2 and L3. Hardly hydrolyzes L2. Does not hydrolyze lichenan, pustulan, carboxymethyl cellulose, locust bean gum or soluble starch. The protein is Glucan endo-1,3-beta-glucosidase of Cryptopygus antarcticus (Antarctic springtail).